Consider the following 477-residue polypeptide: UDP-N-acetylmuramate--L-alanine ligase (477 aa).

Position 122 to 128 (122 to 128) interacts with ATP; sequence GTHGKTT.

This sequence belongs to the MurCDEF family.

The protein localises to the cytoplasm. The catalysed reaction is UDP-N-acetyl-alpha-D-muramate + L-alanine + ATP = UDP-N-acetyl-alpha-D-muramoyl-L-alanine + ADP + phosphate + H(+). Its pathway is cell wall biogenesis; peptidoglycan biosynthesis. Its function is as follows. Cell wall formation. The protein is UDP-N-acetylmuramate--L-alanine ligase of Xylella fastidiosa (strain 9a5c).